The following is a 93-amino-acid chain: Small ribosomal subunit protein uS19m (93 aa).

Belongs to the universal ribosomal protein uS19 family. In terms of assembly, component of the mitochondrial small ribosomal subunit (mt-SSU). Mature yeast 74S mitochondrial ribosomes consist of a small (37S) and a large (54S) subunit. The 37S small subunit contains a 15S ribosomal RNA (15S mt-rRNA) and at least 32 different proteins. The 54S large subunit contains a 21S rRNA (21S mt-rRNA) and at least 45 different proteins.

It is found in the mitochondrion. Its function is as follows. Component of the mitochondrial ribosome (mitoribosome), a dedicated translation machinery responsible for the synthesis of mitochondrial genome-encoded proteins, including at least some of the essential transmembrane subunits of the mitochondrial respiratory chain. The mitoribosomes are attached to the mitochondrial inner membrane and translation products are cotranslationally integrated into the membrane. The chain is Small ribosomal subunit protein uS19m (rsm19) from Schizosaccharomyces pombe (strain 972 / ATCC 24843) (Fission yeast).